A 312-amino-acid polypeptide reads, in one-letter code: MKVAVLGAAGGIGQALALLLKTQLPSGSELSLYDIAPVTPGVAVDLSHIPTAVKIKGFSGEDATPALEGADVVLISAGVARKPGMDRSDLFNVNAGIVKNLVQQVAKTCPKACIGIITNPVNTTVAIAAEVLKKAGVYDKNKLFGVTTLDIIRSNTFVAELKGKQPGEVEVPVIGGHSGVTILPLLSQVPGVSFTEQEVADLTKRIQNAGTEVVEAKAGGGSATLSMGQAAARFGLSLVRALQGEQGVVECAYVEGDGQYARFFSQPLLLGKNGVEERKSIGTLSAFEKNALEGMLDTLKKDIALGEEFVNK.

NAD(+) contacts are provided by residues 7–13 (GAAGGIG) and aspartate 34. Positions 81 and 87 each coordinate substrate. NAD(+)-binding positions include asparagine 94 and 117 to 119 (ITN). 2 residues coordinate substrate: asparagine 119 and arginine 153. The Proton acceptor role is filled by histidine 177. Residue methionine 227 coordinates NAD(+).

The protein belongs to the LDH/MDH superfamily. MDH type 1 family. In terms of assembly, homodimer.

The catalysed reaction is (S)-malate + NAD(+) = oxaloacetate + NADH + H(+). Catalyzes the reversible oxidation of malate to oxaloacetate. This Escherichia coli O7:K1 (strain IAI39 / ExPEC) protein is Malate dehydrogenase.